A 43-amino-acid polypeptide reads, in one-letter code: Potassium channel toxin gamma-KTx 4.2 (43 aa).

4 cysteine pairs are disulfide-bonded: cysteine 5–cysteine 23, cysteine 11–cysteine 34, cysteine 20–cysteine 39, and cysteine 24–cysteine 41.

It belongs to the ergtoxin family. Gamma-KTx 4 subfamily. As to expression, expressed by the venom gland.

It localises to the secreted. Its function is as follows. Reversibly blocks Kv11/ERG potassium channels. This is Potassium channel toxin gamma-KTx 4.2 from Centruroides noxius (Mexican scorpion).